The following is a 215-amino-acid chain: FMN-dependent NADH:quinone oxidoreductase 1 (215 aa).

Belongs to the azoreductase type 1 family. Homodimer. The cofactor is FMN.

The enzyme catalyses 2 a quinone + NADH + H(+) = 2 a 1,4-benzosemiquinone + NAD(+). It catalyses the reaction N,N-dimethyl-1,4-phenylenediamine + anthranilate + 2 NAD(+) = 2-(4-dimethylaminophenyl)diazenylbenzoate + 2 NADH + 2 H(+). Its function is as follows. Quinone reductase that provides resistance to thiol-specific stress caused by electrophilic quinones. Also exhibits azoreductase activity. Catalyzes the reductive cleavage of the azo bond in aromatic azo compounds to the corresponding amines. The polypeptide is FMN-dependent NADH:quinone oxidoreductase 1 (Lactiplantibacillus plantarum (strain ATCC BAA-793 / NCIMB 8826 / WCFS1) (Lactobacillus plantarum)).